We begin with the raw amino-acid sequence, 248 residues long: MKLIVNADDFGYSKGVNLGIVEAHREGVVTSATLMVNMEGFEHAVGLAKEHPTLGVGIHLVLTCGSPVSQDVPSLTDGEGRFRRGQDHLISAVPEEIERELRAQLGRFVAAGLKLTHIDSHHHVHAHPAILPIVLKLAEEYRVPVRYPWLFGTQEKRDQLSILTTEGFSHHFYGDDLTVQSFVRIVEDMADYPVVEIMTHPAYLDEAVLTGSSYAKQRTTELKILTAAELKQYIHDQKIQLVTFSELG.

Residues His-59 and His-121 each contribute to the Mg(2+) site.

Belongs to the YdjC deacetylase family. The cofactor is Mg(2+).

In terms of biological role, probably catalyzes the deacetylation of acetylated carbohydrates an important step in the degradation of oligosaccharides. The sequence is that of Carbohydrate deacetylase from Brevibacillus brevis (strain 47 / JCM 6285 / NBRC 100599).